We begin with the raw amino-acid sequence, 402 residues long: Oxysterol-binding protein 12 (402 aa).

The interval Asn-333–Glu-366 is disordered. A compositionally biased stretch (basic and acidic residues) spans Asn-336 to Glu-366.

Belongs to the OSBP family.

This Dictyostelium discoideum (Social amoeba) protein is Oxysterol-binding protein 12 (osbL).